The chain runs to 311 residues: Elongation factor Ts (311 aa).

An involved in Mg(2+) ion dislocation from EF-Tu region spans residues 81–84 (TDFV).

This sequence belongs to the EF-Ts family.

Its subcellular location is the cytoplasm. Functionally, associates with the EF-Tu.GDP complex and induces the exchange of GDP to GTP. It remains bound to the aminoacyl-tRNA.EF-Tu.GTP complex up to the GTP hydrolysis stage on the ribosome. This chain is Elongation factor Ts, found in Trichlorobacter lovleyi (strain ATCC BAA-1151 / DSM 17278 / SZ) (Geobacter lovleyi).